The primary structure comprises 348 residues: tRNA (cytosine(34)-C(5))-methyltransferase, mitochondrial (348 aa).

S-adenosyl-L-methionine-binding positions include 139–145 (CAAPGGK), glutamate 162, aspartate 193, and aspartate 211. Cysteine 265 (nucleophile) is an active-site residue.

This sequence belongs to the class I-like SAM-binding methyltransferase superfamily. RsmB/NOP family.

Its subcellular location is the mitochondrion matrix. It catalyses the reaction cytidine(34) in mitochondrial tRNA + S-adenosyl-L-methionine = 5-methylcytidine(34) in mitochondrial tRNA + S-adenosyl-L-homocysteine + H(+). Its function is as follows. Mitochondrial tRNA methyltransferase that mediates methylation of cytosine to 5-methylcytosine (m5C) at position 34 of mt-tRNA(Met). mt-tRNA(Met) methylation at cytosine(34) takes place at the wobble position of the anticodon and initiates the formation of 5-formylcytosine (f(5)c) at this position. mt-tRNA(Met) containing the f(5)c modification at the wobble position enables recognition of the AUA codon in addition to the AUG codon, expanding codon recognition in mitochondrial translation. This chain is tRNA (cytosine(34)-C(5))-methyltransferase, mitochondrial, found in Mus musculus (Mouse).